Consider the following 890-residue polypeptide: Translation initiation factor IF-2 (890 aa).

Positions 45–304 (LIDHLNQKNS…LQQGFQKPAQ (260 aa)) are disordered. A compositionally biased stretch (polar residues) spans 67–81 (STLNIPGTGGKSKSV). Positions 92-217 (VKRDPQEAER…RMAEENKWTD (126 aa)) are enriched in basic and acidic residues. Over residues 252–266 (GRGRNAKAARPKKGN) the composition is skewed to basic residues. Over residues 267-280 (KHAESKADREEARA) the composition is skewed to basic and acidic residues. One can recognise a tr-type G domain in the interval 389 to 558 (PRAPVVTIMG…LLQAEVLELK (170 aa)). Residues 398–405 (GHVDHGKT) form a G1 region. 398–405 (GHVDHGKT) provides a ligand contact to GTP. The segment at 423–427 (GITQH) is G2. Residues 444–447 (DTPG) form a G3 region. Residues 444 to 448 (DTPGH) and 498 to 501 (NKID) each bind GTP. The tract at residues 498 to 501 (NKID) is G4. A G5 region spans residues 534 to 536 (SAK). The residue at position 808 (lysine 808) is an N6-acetyllysine.

This sequence belongs to the TRAFAC class translation factor GTPase superfamily. Classic translation factor GTPase family. IF-2 subfamily.

It localises to the cytoplasm. In terms of biological role, one of the essential components for the initiation of protein synthesis. Protects formylmethionyl-tRNA from spontaneous hydrolysis and promotes its binding to the 30S ribosomal subunits. Also involved in the hydrolysis of GTP during the formation of the 70S ribosomal complex. The chain is Translation initiation factor IF-2 from Escherichia coli (strain SMS-3-5 / SECEC).